The chain runs to 961 residues: DNA replication licensing factor MCM2 (961 aa).

Residues 1–17 (MDDSENNAPSTPGSPGF) are compositionally biased toward polar residues. Disordered stretches follow at residues 1 to 81 (MDDS…FNDN) and 120 to 220 (AEAE…EEDE). Acidic residues predominate over residues 39–78 (SDDDDDDVVGAEEAEVDPNVLPEDDGVVAAEEEEDGEDLF). Basic and acidic residues-rich tracts occupy residues 120–146 (AEAELDARDVRTGAAPDRKLPRMLHDQ) and 166–176 (PPREPRTPRSD). Acidic residues predominate over residues 205–220 (QTDDDPYEDEFDEEDE). The C4-type zinc finger occupies 380–406 (CSKCGTVLGPFFQNSYTEVKVGSCPEC). The MCM domain maps to 524–730 (IGERIVKSIA…FTDEMLARFV (207 aa)). Position 574-581 (574-581 (GDPGTAKS)) interacts with ATP. The short motif at 706–709 (SRFD) is the Arginine finger element.

Belongs to the MCM family. In terms of assembly, component of the minichromosome maintenance (MCM) complex, a heterotetramer composed of MCM2, MCM3, MCM4, MCM5, MCM6 and MCM7. Interacts with CSN5. In terms of tissue distribution, widely expressed, with higher expression in developing tissues.

It localises to the nucleus. The enzyme catalyses ATP + H2O = ADP + phosphate + H(+). Probable component of the MCM2-7 complex (MCM complex) that may function as a DNA helicase and which is essential to undergo a single round of replication initiation and elongation per cell cycle in eukaryotic cells. Can complement the fission yeast mcm2 mutant. This Oryza sativa subsp. japonica (Rice) protein is DNA replication licensing factor MCM2.